Reading from the N-terminus, the 334-residue chain is GTP 3',8-cyclase (334 aa).

The Radical SAM core domain occupies 13–239 (RFHRKFYYLR…KVKAANDGPA (227 aa)). Arginine 22 contributes to the GTP binding site. [4Fe-4S] cluster-binding residues include cysteine 29 and cysteine 33. Tyrosine 35 lines the S-adenosyl-L-methionine pocket. Residue cysteine 36 participates in [4Fe-4S] cluster binding. Arginine 73 provides a ligand contact to GTP. Residue glycine 77 coordinates S-adenosyl-L-methionine. Residue threonine 104 participates in GTP binding. Serine 128 contacts S-adenosyl-L-methionine. Lysine 165 lines the GTP pocket. Methionine 199 contacts S-adenosyl-L-methionine. Residues cysteine 262 and cysteine 265 each coordinate [4Fe-4S] cluster. 267–269 (RLR) provides a ligand contact to GTP. Position 279 (cysteine 279) interacts with [4Fe-4S] cluster.

Belongs to the radical SAM superfamily. MoaA family. In terms of assembly, monomer and homodimer. The cofactor is [4Fe-4S] cluster.

The catalysed reaction is GTP + AH2 + S-adenosyl-L-methionine = (8S)-3',8-cyclo-7,8-dihydroguanosine 5'-triphosphate + 5'-deoxyadenosine + L-methionine + A + H(+). The protein operates within cofactor biosynthesis; molybdopterin biosynthesis. In terms of biological role, catalyzes the cyclization of GTP to (8S)-3',8-cyclo-7,8-dihydroguanosine 5'-triphosphate. This chain is GTP 3',8-cyclase, found in Vibrio vulnificus (strain CMCP6).